The sequence spans 64 residues: Large ribosomal subunit protein bL35 (64 aa).

A compositionally biased stretch (basic residues) spans 1–42 (MPKAKTHSGASKRFRRTGTGKIVRQKANRRHLLEHKSSKRTR). Residues 1–64 (MPKAKTHSGA…TKRVKSLLNG (64 aa)) form a disordered region.

This sequence belongs to the bacterial ribosomal protein bL35 family.

This chain is Large ribosomal subunit protein bL35, found in Mycobacterium ulcerans (strain Agy99).